The following is a 299-amino-acid chain: ATP phosphoribosyltransferase (299 aa).

It belongs to the ATP phosphoribosyltransferase family. Long subfamily. In terms of assembly, equilibrium between an active dimeric form, an inactive hexameric form and higher aggregates. Interconversion between the various forms is largely reversible and is influenced by the natural substrates and inhibitors of the enzyme. The cofactor is Mg(2+).

It localises to the cytoplasm. It carries out the reaction 1-(5-phospho-beta-D-ribosyl)-ATP + diphosphate = 5-phospho-alpha-D-ribose 1-diphosphate + ATP. The protein operates within amino-acid biosynthesis; L-histidine biosynthesis; L-histidine from 5-phospho-alpha-D-ribose 1-diphosphate: step 1/9. Feedback inhibited by histidine. Functionally, catalyzes the condensation of ATP and 5-phosphoribose 1-diphosphate to form N'-(5'-phosphoribosyl)-ATP (PR-ATP). Has a crucial role in the pathway because the rate of histidine biosynthesis seems to be controlled primarily by regulation of HisG enzymatic activity. The protein is ATP phosphoribosyltransferase of Escherichia coli O81 (strain ED1a).